Consider the following 62-residue polypeptide: Potassium channel toxin kappa-KTx 1.4 (62 aa).

An N-terminal signal peptide occupies residues 1 to 26 (MKSCLINVSLLILLLLPILGYASVNA). Residues 27–38 (ESIDGENDFEEE) constitute a propeptide that is removed on maturation. Cystine bridges form between cysteine 43–cysteine 61 and cysteine 47–cysteine 57.

The protein belongs to the short scorpion toxin superfamily. Potassium channel inhibitor kappa-KTx family. Kappa-KTx 1 subfamily. Expressed by the venom gland.

It is found in the secreted. In terms of biological role, shows structural homology with WaTx suggesting that it acts as a cell-penetrating peptide (CPP) with defensive purpose that induces pain by specifically activating mammalian sensory neuron TRPA1 channels. Has no effect on the voltage-gated potassium channels tested. The polypeptide is Potassium channel toxin kappa-KTx 1.4 (Heterometrus petersii (Asian forest scorpion)).